The chain runs to 275 residues: Large ribosomal subunit protein uL2 (275 aa).

The segment at 224–275 (AMNPVDHPHGGGEAKAGQGNPHPVTPWGVPTKGYKTRKNKRTQQFIVRDRRG) is disordered.

This sequence belongs to the universal ribosomal protein uL2 family. Part of the 50S ribosomal subunit. Forms a bridge to the 30S subunit in the 70S ribosome.

In terms of biological role, one of the primary rRNA binding proteins. Required for association of the 30S and 50S subunits to form the 70S ribosome, for tRNA binding and peptide bond formation. It has been suggested to have peptidyltransferase activity; this is somewhat controversial. Makes several contacts with the 16S rRNA in the 70S ribosome. The sequence is that of Large ribosomal subunit protein uL2 from Xanthomonas axonopodis pv. citri (strain 306).